A 104-amino-acid polypeptide reads, in one-letter code: Iron-sulfur cluster assembly protein CyaY (104 aa).

The protein belongs to the frataxin family.

Its function is as follows. Involved in iron-sulfur (Fe-S) cluster assembly. May act as a regulator of Fe-S biogenesis. This is Iron-sulfur cluster assembly protein CyaY from Vibrio campbellii (strain ATCC BAA-1116).